Reading from the N-terminus, the 374-residue chain is Glutamate 5-kinase (374 aa).

Lysine 16 is an ATP binding site. Residues serine 56, aspartate 143, and asparagine 155 each coordinate substrate. Position 175 to 176 (175 to 176 (TD)) interacts with ATP. Residues 282 to 360 (RGRVVLDAGA…SEIEAVLGYV (79 aa)) enclose the PUA domain.

Belongs to the glutamate 5-kinase family.

The protein resides in the cytoplasm. The catalysed reaction is L-glutamate + ATP = L-glutamyl 5-phosphate + ADP. It functions in the pathway amino-acid biosynthesis; L-proline biosynthesis; L-glutamate 5-semialdehyde from L-glutamate: step 1/2. Catalyzes the transfer of a phosphate group to glutamate to form L-glutamate 5-phosphate. The sequence is that of Glutamate 5-kinase from Ralstonia nicotianae (strain ATCC BAA-1114 / GMI1000) (Ralstonia solanacearum).